The following is a 797-amino-acid chain: Phenylalanine--tRNA ligase beta subunit (797 aa).

One can recognise a tRNA-binding domain in the interval 40-154 (MEGLSKLVVG…ADAKVGDSIF (115 aa)). Positions 407–482 (PILPKVSITL…RIYGYDNLPS (76 aa)) constitute a B5 domain. Mg(2+)-binding residues include D460, D466, E469, and E470. One can recognise an FDX-ACB domain in the interval 704–797 (PKVQAVHRDI…LVEKLDIEIR (94 aa)).

This sequence belongs to the phenylalanyl-tRNA synthetase beta subunit family. Type 1 subfamily. In terms of assembly, tetramer of two alpha and two beta subunits. The cofactor is Mg(2+).

It localises to the cytoplasm. The enzyme catalyses tRNA(Phe) + L-phenylalanine + ATP = L-phenylalanyl-tRNA(Phe) + AMP + diphosphate + H(+). In Lactococcus lactis subsp. lactis (strain IL1403) (Streptococcus lactis), this protein is Phenylalanine--tRNA ligase beta subunit.